The following is a 313-amino-acid chain: Adhesin MafA 2 (313 aa).

The first 14 residues, 1–14, serve as a signal peptide directing secretion; sequence MKTLLLLIPLVLTA. Cys-15 carries the N-palmitoyl cysteine lipid modification. Residue Cys-15 is the site of S-diacylglycerol cysteine attachment. Over residues 282 to 297 the composition is skewed to polar residues; the sequence is GDTTAQNRPDFKQNNG. The tract at residues 282–313 is disordered; it reads GDTTAQNRPDFKQNNGKKPDVGNEVIRRRKGG.

Belongs to the MafA family.

Its subcellular location is the cell outer membrane. This chain is Adhesin MafA 2 (mafA2), found in Neisseria meningitidis serogroup A / serotype 4A (strain DSM 15465 / Z2491).